A 231-amino-acid chain; its full sequence is Uracil-DNA glycosylase (231 aa).

Catalysis depends on Asp-74, which acts as the Proton acceptor.

The protein belongs to the uracil-DNA glycosylase (UDG) superfamily. UNG family.

It is found in the cytoplasm. It catalyses the reaction Hydrolyzes single-stranded DNA or mismatched double-stranded DNA and polynucleotides, releasing free uracil.. Its function is as follows. Excises uracil residues from the DNA which can arise as a result of misincorporation of dUMP residues by DNA polymerase or due to deamination of cytosine. This is Uracil-DNA glycosylase from Campylobacter jejuni subsp. jejuni serotype O:6 (strain 81116 / NCTC 11828).